Reading from the N-terminus, the 432-residue chain is Lipoyl synthase, mitochondrial (432 aa).

A compositionally biased stretch (low complexity) spans 32-68 (TLGATPGSTSTSTSTSTATTTTLESTSTSTSGDATET). The tract at residues 32-71 (TLGATPGSTSTSTSTSTATTTTLESTSTSTSGDATETTIK) is disordered. [4Fe-4S] cluster-binding residues include Cys-150, Cys-155, Cys-161, Cys-180, Cys-184, Cys-187, and Ser-395. The 220-residue stretch at 165–384 (KKSEATATIM…RDVALEMGFL (220 aa)) folds into the Radical SAM core domain.

Belongs to the radical SAM superfamily. Lipoyl synthase family. It depends on [4Fe-4S] cluster as a cofactor.

The protein resides in the mitochondrion. It carries out the reaction [[Fe-S] cluster scaffold protein carrying a second [4Fe-4S](2+) cluster] + N(6)-octanoyl-L-lysyl-[protein] + 2 oxidized [2Fe-2S]-[ferredoxin] + 2 S-adenosyl-L-methionine + 4 H(+) = [[Fe-S] cluster scaffold protein] + N(6)-[(R)-dihydrolipoyl]-L-lysyl-[protein] + 4 Fe(3+) + 2 hydrogen sulfide + 2 5'-deoxyadenosine + 2 L-methionine + 2 reduced [2Fe-2S]-[ferredoxin]. It functions in the pathway protein modification; protein lipoylation via endogenous pathway; protein N(6)-(lipoyl)lysine from octanoyl-[acyl-carrier-protein]: step 2/2. Catalyzes the radical-mediated insertion of two sulfur atoms into the C-6 and C-8 positions of the octanoyl moiety bound to the lipoyl domains of lipoate-dependent enzymes, thereby converting the octanoylated domains into lipoylated derivatives. The protein is Lipoyl synthase, mitochondrial of Lodderomyces elongisporus (strain ATCC 11503 / CBS 2605 / JCM 1781 / NBRC 1676 / NRRL YB-4239) (Yeast).